Consider the following 261-residue polypeptide: Metallo-beta-lactamase fold-containing protein ST1585 (261 aa).

Zn(2+)-binding residues include His58, His60, Asp62, His63, His148, Asp165, and His207.

The protein belongs to the metallo-beta-lactamase superfamily. Monomer.

The chain is Metallo-beta-lactamase fold-containing protein ST1585 from Sulfurisphaera tokodaii (strain DSM 16993 / JCM 10545 / NBRC 100140 / 7) (Sulfolobus tokodaii).